Consider the following 382-residue polypeptide: Lipid-A-disaccharide synthase (382 aa).

The protein belongs to the LpxB family.

It catalyses the reaction 2-N,3-O-bis[(3R)-3-hydroxytetradecanoyl]-alpha-D-glucosaminyl 1-phosphate + UDP-2-N,3-O-bis[(3R)-3-hydroxytetradecanoyl]-alpha-D-glucosamine = lipid A disaccharide (E. coli) + UDP + H(+). It carries out the reaction a lipid X + a UDP-2-N,3-O-bis[(3R)-3-hydroxyacyl]-alpha-D-glucosamine = a lipid A disaccharide + UDP + H(+). It functions in the pathway glycolipid biosynthesis; lipid IV(A) biosynthesis; lipid IV(A) from (3R)-3-hydroxytetradecanoyl-[acyl-carrier-protein] and UDP-N-acetyl-alpha-D-glucosamine: step 5/6. In terms of biological role, condensation of UDP-2,3-diacylglucosamine and 2,3-diacylglucosamine-1-phosphate to form lipid A disaccharide, a precursor of lipid A, a phosphorylated glycolipid that anchors the lipopolysaccharide to the outer membrane of the cell. This Escherichia coli (strain SMS-3-5 / SECEC) protein is Lipid-A-disaccharide synthase.